Consider the following 397-residue polypeptide: uncharacterized protein (397 aa).

This is an uncharacterized protein from Thermotoga maritima (strain ATCC 43589 / DSM 3109 / JCM 10099 / NBRC 100826 / MSB8).